We begin with the raw amino-acid sequence, 90 residues long: uncharacterized protein (90 aa).

This is an uncharacterized protein from Treponema pallidum (strain Nichols).